The sequence spans 624 residues: MSPTAAPQKLSKVEDLKARSQYLLEPILSQLQEESTHFNEDGIQILKFHGSYQQDNRDNRVKGQEKDFQFMLRLRSPGGYIPPQLYLTLDQLADDYGNGTLRATTRQAFQLHGILKRDLKTVIRRIVENLGSTISACGDVNRNVMAPPAPFRDRPEYEWARTYANNIADLLTPESGAYYELWLDGEKVLSGEPDPAVLAARRNPKGRVADSVEPLYSDRYLPRKFKIAVTVPGDNSIDLFTQDIGLVVIGNDRGELEGFNVYVGGGMGRTHNKEETFARLADPLGFVPAADIYAAVQAIVATQRDYGDRSNRRHARMKYLIHDWGIAKFKEAVESVFGKAIAPVRELPPFRYRDYLGWHEQGDGKWFLGLPITSGRIKDDGNWQLRSALREIVSRWQLPLLLTGSQDVLIYDVQPGDRAAIDKLLRDRGVHTVEAIDSLQRYAMACPALPTCGLAITESERALPGLLVRIRRLLEEQGLPDEHFVVRMTGCPNGCARPYMAELAFVGSAPNTYQLWLGGSPDQTRLARPFIDRLADGDVETQLRPLFVFFKQSRQAGESFGDFCDRVGFDALRQFSESYQHEAAKPRYRVGLRADVHGRLKAEADKRGVSLTDLACEAIAAYLR.

The 3'-(S-cysteinyl)-tyrosine (Tyr-Cys) cross-link spans 52–137 (YQQDNRDNRV…ENLGSTISAC (86 aa)). [4Fe-4S] cluster-binding residues include Cys446, Cys452, Cys491, and Cys495. Cys495 serves as a coordination point for siroheme.

This sequence belongs to the nitrite and sulfite reductase 4Fe-4S domain family. As to quaternary structure, monomer. It depends on siroheme as a cofactor. [4Fe-4S] cluster serves as cofactor.

The catalysed reaction is hydrogen sulfide + 6 oxidized [2Fe-2S]-[ferredoxin] + 3 H2O = sulfite + 6 reduced [2Fe-2S]-[ferredoxin] + 7 H(+). Catalyzes the reduction of sulfite to sulfide, a step in the biosynthesis of sulfur-containing amino acids and cofactors. The protein is Sulfite reductase [ferredoxin] (sir) of Synechococcus elongatus (strain ATCC 33912 / PCC 7942 / FACHB-805) (Anacystis nidulans R2).